The following is a 597-amino-acid chain: Elongation factor 4 (597 aa).

The region spanning 2-184 (DHIRNFSIIA…ALVAKVPPPK (183 aa)) is the tr-type G domain. GTP is bound by residues 14-19 (DHGKST) and 131-134 (NKID).

The protein belongs to the TRAFAC class translation factor GTPase superfamily. Classic translation factor GTPase family. LepA subfamily.

The protein resides in the cell inner membrane. The enzyme catalyses GTP + H2O = GDP + phosphate + H(+). Required for accurate and efficient protein synthesis under certain stress conditions. May act as a fidelity factor of the translation reaction, by catalyzing a one-codon backward translocation of tRNAs on improperly translocated ribosomes. Back-translocation proceeds from a post-translocation (POST) complex to a pre-translocation (PRE) complex, thus giving elongation factor G a second chance to translocate the tRNAs correctly. Binds to ribosomes in a GTP-dependent manner. This is Elongation factor 4 from Paraburkholderia xenovorans (strain LB400).